The following is a 541-amino-acid chain: Pseudokinase FAM20A (541 aa).

An N-terminal signal peptide occupies residues 1-33 (MPGLRRDRLLALLLLGALFSADLYFHLWPQVQR). N-linked (GlcNAc...) asparagine glycosylation is found at N70, N145, and N287. Intrachain disulfides connect C314/C330, C319/C323, C378/C452, and C453/C512. N-linked (GlcNAc...) asparagine glycosylation occurs at N388. Residue N538 is glycosylated (N-linked (GlcNAc...) asparagine).

The protein belongs to the FAM20 family. In terms of assembly, interacts with FAM20C; probably forming a heterotetramer of 2 subunits of FAM20A and 2 subunits of FAM20C. In terms of processing, N-glycosylated. As to expression, in the mammary gland, expressed at higher levels in lactating mice than in virgin mice. Observed throughout the tissues of the mandibular incisor, including the secretory and maturation stage ameloblasts, the suprabasal layers of the gingival epithelium and the odontoblasts. Weak expression in the enamel matrix.

The protein resides in the secreted. Its subcellular location is the golgi apparatus. It localises to the endoplasmic reticulum. Its function is as follows. Pseudokinase that acts as an allosteric activator of the Golgi serine/threonine protein kinase FAM20C and is involved in biomineralization of teeth. Forms a complex with FAM20C and increases the ability of FAM20C to phosphorylate the proteins that form the 'matrix' that guides the deposition of the enamel minerals. The sequence is that of Pseudokinase FAM20A from Mus musculus (Mouse).